The following is a 295-amino-acid chain: Ribosomal RNA small subunit methyltransferase H (295 aa).

S-adenosyl-L-methionine-binding positions include 32 to 34 (GGY), D50, F77, D98, and Q105. The disordered stretch occupies residues 275–295 (KEISENTRSRSAKLRGIVKEE).

Belongs to the methyltransferase superfamily. RsmH family.

Its subcellular location is the cytoplasm. It carries out the reaction cytidine(1402) in 16S rRNA + S-adenosyl-L-methionine = N(4)-methylcytidine(1402) in 16S rRNA + S-adenosyl-L-homocysteine + H(+). In terms of biological role, specifically methylates the N4 position of cytidine in position 1402 (C1402) of 16S rRNA. The polypeptide is Ribosomal RNA small subunit methyltransferase H (Anaplasma phagocytophilum (strain HZ)).